Here is a 464-residue protein sequence, read N- to C-terminus: Fumarate hydratase class II (464 aa).

Substrate contacts are provided by residues 96-98 (SGT), 127-130 (HPND), 137-139 (SSN), and threonine 185. The active-site Proton donor/acceptor is the histidine 186. Serine 316 is a catalytic residue. Substrate is bound by residues serine 317 and 322-324 (KVN).

This sequence belongs to the class-II fumarase/aspartase family. Fumarase subfamily. In terms of assembly, homotetramer.

It localises to the cytoplasm. It carries out the reaction (S)-malate = fumarate + H2O. The protein operates within carbohydrate metabolism; tricarboxylic acid cycle; (S)-malate from fumarate: step 1/1. Involved in the TCA cycle. Catalyzes the stereospecific interconversion of fumarate to L-malate. The polypeptide is Fumarate hydratase class II (Pseudomonas syringae pv. tomato (strain ATCC BAA-871 / DC3000)).